A 219-amino-acid chain; its full sequence is Uracil-DNA glycosylase (219 aa).

Aspartate 63 serves as the catalytic Proton acceptor.

It belongs to the uracil-DNA glycosylase (UDG) superfamily. UNG family.

It localises to the cytoplasm. The catalysed reaction is Hydrolyzes single-stranded DNA or mismatched double-stranded DNA and polynucleotides, releasing free uracil.. Functionally, excises uracil residues from the DNA which can arise as a result of misincorporation of dUMP residues by DNA polymerase or due to deamination of cytosine. This Mesomycoplasma hyopneumoniae (strain 7448) (Mycoplasma hyopneumoniae) protein is Uracil-DNA glycosylase.